Here is a 239-residue protein sequence, read N- to C-terminus: 1-(5-phosphoribosyl)-5-[(5-phosphoribosylamino)methylideneamino] imidazole-4-carboxamide isomerase (239 aa).

Asp8 (proton acceptor) is an active-site residue. The active-site Proton donor is the Asp129.

The protein belongs to the HisA/HisF family.

Its subcellular location is the cytoplasm. It catalyses the reaction 1-(5-phospho-beta-D-ribosyl)-5-[(5-phospho-beta-D-ribosylamino)methylideneamino]imidazole-4-carboxamide = 5-[(5-phospho-1-deoxy-D-ribulos-1-ylimino)methylamino]-1-(5-phospho-beta-D-ribosyl)imidazole-4-carboxamide. Its pathway is amino-acid biosynthesis; L-histidine biosynthesis; L-histidine from 5-phospho-alpha-D-ribose 1-diphosphate: step 4/9. The protein is 1-(5-phosphoribosyl)-5-[(5-phosphoribosylamino)methylideneamino] imidazole-4-carboxamide isomerase of Bacillus cereus (strain G9842).